A 257-amino-acid chain; its full sequence is Lipid A 4'-phosphatase (257 aa).

The next 6 helical transmembrane spans lie at 21–41 (FGAF…FRAF), 85–105 (IFFR…IECY), 119–139 (KLKV…NVIL), 174–194 (CSFV…LLFV), 201–221 (ALVP…LSFG), and 225–245 (LSDV…LLAL).

The protein belongs to the lipid A LpxF 4'-phosphatase family.

It is found in the cell inner membrane. Its pathway is bacterial outer membrane biogenesis; LPS lipid A biosynthesis. Probably removes the 4'-phosphate moiety from lipid A species. Not seen to act on other membrane components, nor does it dephosphorylate the 1-phosphate group of lipid A and/or lipid A precursors. In Rhizobium etli (strain ATCC 51251 / DSM 11541 / JCM 21823 / NBRC 15573 / CFN 42), this protein is Lipid A 4'-phosphatase.